The chain runs to 172 residues: Protein GrpE (172 aa).

Positions 1–11 are enriched in low complexity; the sequence is MSEENNSQNSN. Positions 1-22 are disordered; it reads MSEENNSQNSNPPNPENGEIAS.

This sequence belongs to the GrpE family. In terms of assembly, homodimer.

It localises to the cytoplasm. Its function is as follows. Participates actively in the response to hyperosmotic and heat shock by preventing the aggregation of stress-denatured proteins, in association with DnaK and GrpE. It is the nucleotide exchange factor for DnaK and may function as a thermosensor. Unfolded proteins bind initially to DnaJ; upon interaction with the DnaJ-bound protein, DnaK hydrolyzes its bound ATP, resulting in the formation of a stable complex. GrpE releases ADP from DnaK; ATP binding to DnaK triggers the release of the substrate protein, thus completing the reaction cycle. Several rounds of ATP-dependent interactions between DnaJ, DnaK and GrpE are required for fully efficient folding. The protein is Protein GrpE of Bdellovibrio bacteriovorus (strain ATCC 15356 / DSM 50701 / NCIMB 9529 / HD100).